A 297-amino-acid polypeptide reads, in one-letter code: Lymphocyte antigen 6 complex locus protein G6f (297 aa).

The first 16 residues, 1-16, serve as a signal peptide directing secretion; the sequence is MAVLFLLLFLCGTPQA. In terms of domain architecture, Ig-like V-type spans 17 to 122; the sequence is ADNMQAIYVA…HNYQNWRVYD (106 aa). At 17-235 the chain is on the extracellular side; it reads ADNMQAIYVA…APSTGWDMPW (219 aa). The cysteines at positions 35 and 106 are disulfide-linked. N-linked (GlcNAc...) asparagine glycosylation occurs at asparagine 88. Residues 236–256 traverse the membrane as a helical segment; that stretch reads ILMLLLTMGQGVVILALSIVL. At 257-297 the chain is on the cytoplasmic side; the sequence is WRQRVRGAPGRDASIPQFKPEIQVYENIHLARLGPPAHKPR. Phosphotyrosine is present on tyrosine 281.

Homodimer; disulfide-linked. Interacts with GRB2 and GRB7 in a phosphorylation-dependent manner. In terms of processing, N-glycosylated.

The protein localises to the cell membrane. In terms of biological role, may play a role in the downstream signal transduction pathways involving GRB2 and GRB7. This Homo sapiens (Human) protein is Lymphocyte antigen 6 complex locus protein G6f (LY6G6F).